The following is a 455-amino-acid chain: Glutamate-1-semialdehyde 2,1-aminomutase (455 aa).

Lysine 286 is modified (N6-(pyridoxal phosphate)lysine).

This sequence belongs to the class-III pyridoxal-phosphate-dependent aminotransferase family. HemL subfamily. As to quaternary structure, homodimer. Requires pyridoxal 5'-phosphate as cofactor.

It is found in the cytoplasm. The catalysed reaction is (S)-4-amino-5-oxopentanoate = 5-aminolevulinate. Its pathway is porphyrin-containing compound metabolism; protoporphyrin-IX biosynthesis; 5-aminolevulinate from L-glutamyl-tRNA(Glu): step 2/2. The chain is Glutamate-1-semialdehyde 2,1-aminomutase from Clavibacter michiganensis subsp. michiganensis (strain NCPPB 382).